Consider the following 354-residue polypeptide: Uroporphyrinogen decarboxylase (354 aa).

Substrate is bound by residues 27–31 (RQAGR), phenylalanine 46, aspartate 77, tyrosine 154, serine 209, and histidine 327.

Belongs to the uroporphyrinogen decarboxylase family. In terms of assembly, homodimer.

The protein resides in the cytoplasm. The catalysed reaction is uroporphyrinogen III + 4 H(+) = coproporphyrinogen III + 4 CO2. Its pathway is porphyrin-containing compound metabolism; protoporphyrin-IX biosynthesis; coproporphyrinogen-III from 5-aminolevulinate: step 4/4. In terms of biological role, catalyzes the decarboxylation of four acetate groups of uroporphyrinogen-III to yield coproporphyrinogen-III. This Shewanella oneidensis (strain ATCC 700550 / JCM 31522 / CIP 106686 / LMG 19005 / NCIMB 14063 / MR-1) protein is Uroporphyrinogen decarboxylase.